We begin with the raw amino-acid sequence, 312 residues long: Ribosomal protein L11 methyltransferase (312 aa).

Positions 163, 184, 206, and 248 each coordinate S-adenosyl-L-methionine.

The protein belongs to the methyltransferase superfamily. PrmA family.

The protein localises to the cytoplasm. The catalysed reaction is L-lysyl-[protein] + 3 S-adenosyl-L-methionine = N(6),N(6),N(6)-trimethyl-L-lysyl-[protein] + 3 S-adenosyl-L-homocysteine + 3 H(+). Methylates ribosomal protein L11. The chain is Ribosomal protein L11 methyltransferase from Clostridium botulinum (strain Okra / Type B1).